A 282-amino-acid chain; its full sequence is Homeobox protein pv.1 (282 aa).

Basic and acidic residues-rich tracts occupy residues 17–26 (EEAADGKDSM) and 44–59 (YAKE…DVQE). Positions 17 to 128 (EEAADGKDSM…HRGESPKSDL (112 aa)) are disordered. 2 stretches are compositionally biased toward polar residues: residues 86–96 (WGSSDDFSSVG) and 103–114 (EGSPSPMRNSQE). Residues 116–128 (ETDHRGESPKSDL) show a composition bias toward basic and acidic residues. A DNA-binding region (homeobox) is located at residues 129–188 (QRHLRTAFTPQQISKLEQAFNKQRYLGASERKKLATSLRLSEIQVKTWFQNRRMKLKRQI).

In terms of tissue distribution, expressed in the ventral marginal zone of blastulae. At early gastrulation, expression begins to spread to the animal pole (ectoderm), and at stage 11.5 is expressed in a gradient across the animal cap, with levels highest in the ventral region. At the end of gastrulation, predominantly localized to the ventral and lateral regions of the closing slit blastopore. Also expressed at a low level in ventral endoderm.

It localises to the nucleus. Transcriptional repressor. Acts in a ventral signaling pathway downstream of bmp4, which suppresses dorsal mesoderm formation and leads to both ventral mesoderm and ventral ectoderm formation. Acts in the ectoderm to simultaneously specify epidermal lineages and restrict neuralization. Represses transcription of dorsal-specific genes. Binds to DNA, with preference for the target sequences 5'-TAATGC-3' and 5'-TAATTG-3'. Acts in a pathway downstream of bmp4 and fgf to negatively regulate erythroid specification. This Xenopus laevis (African clawed frog) protein is Homeobox protein pv.1.